Here is a 351-residue protein sequence, read N- to C-terminus: Dihydroorotate dehydrogenase (quinone) (351 aa).

FMN is bound by residues 61–65 (AGLDK) and Thr-85. Residue Lys-65 participates in substrate binding. 110–114 (NRMGF) provides a ligand contact to substrate. FMN-binding residues include Asn-139 and Asn-172. Asn-172 contributes to the substrate binding site. The active-site Nucleophile is Ser-175. Substrate is bound at residue Asn-177. 2 residues coordinate FMN: Lys-217 and Thr-245. A substrate-binding site is contributed by 246 to 247 (NT). Residues Gly-268, Gly-297, and 318-319 (YS) each bind FMN.

It belongs to the dihydroorotate dehydrogenase family. Type 2 subfamily. As to quaternary structure, monomer. It depends on FMN as a cofactor.

Its subcellular location is the cell membrane. The enzyme catalyses (S)-dihydroorotate + a quinone = orotate + a quinol. It functions in the pathway pyrimidine metabolism; UMP biosynthesis via de novo pathway; orotate from (S)-dihydroorotate (quinone route): step 1/1. Catalyzes the conversion of dihydroorotate to orotate with quinone as electron acceptor. This Xanthomonas euvesicatoria pv. vesicatoria (strain 85-10) (Xanthomonas campestris pv. vesicatoria) protein is Dihydroorotate dehydrogenase (quinone).